Here is a 282-residue protein sequence, read N- to C-terminus: Putative SLC9B1-like protein SLC9B1P1 (282 aa).

The next 7 helical transmembrane spans lie at 27–47 (LLAITGFNTCLSIVFYSGGMI), 51–71 (IASLRNVCISLLAGIVLGFFV), 87–107 (GFLVLITFVSAVLGSQPIGLH), 135–155 (IITNVWDIFQPLLFGLVGAEV), 174–194 (LALCVRILNIYLLMCFAGFSF), 198–218 (IFIALAWMPKATVQAVLGPLA), and 239–259 (VAFLAIMITAPNGALLMGILG).

It belongs to the monovalent cation:proton antiporter 1 (CPA1) transporter (TC 2.A.36) family.

It localises to the membrane. The protein is Putative SLC9B1-like protein SLC9B1P1 (SLC9B1P1) of Homo sapiens (Human).